Consider the following 539-residue polypeptide: D-mannonate oxidoreductase (539 aa).

Residue W39–G50 participates in NAD(+) binding.

It belongs to the mannitol dehydrogenase family. UxuB subfamily.

The enzyme catalyses D-mannonate + NAD(+) = keto-D-fructuronate + NADH + H(+). Its pathway is carbohydrate metabolism. Its function is as follows. Catalyzes the reduction of D-fructuronate (D-FruA) to D-mannonate (D-ManA). The polypeptide is D-mannonate oxidoreductase (Thermotoga maritima (strain ATCC 43589 / DSM 3109 / JCM 10099 / NBRC 100826 / MSB8)).